Here is an 875-residue protein sequence, read N- to C-terminus: Alanine--tRNA ligase (875 aa).

Residues His-564, His-568, Cys-666, and His-670 each contribute to the Zn(2+) site.

It belongs to the class-II aminoacyl-tRNA synthetase family. Zn(2+) serves as cofactor.

The protein localises to the cytoplasm. It carries out the reaction tRNA(Ala) + L-alanine + ATP = L-alanyl-tRNA(Ala) + AMP + diphosphate. Functionally, catalyzes the attachment of alanine to tRNA(Ala) in a two-step reaction: alanine is first activated by ATP to form Ala-AMP and then transferred to the acceptor end of tRNA(Ala). Also edits incorrectly charged Ser-tRNA(Ala) and Gly-tRNA(Ala) via its editing domain. The protein is Alanine--tRNA ligase of Mannheimia succiniciproducens (strain KCTC 0769BP / MBEL55E).